The sequence spans 316 residues: Triplex capsid protein 2 (316 aa).

The protein belongs to the herpesviridae TRX2 protein family. In terms of assembly, interacts with TRX1 and major capisd protein/MCP.

The protein localises to the virion. The protein resides in the host nucleus. Its function is as follows. Structural component of the T=16 icosahedral capsid. The capsid is composed of pentamers and hexamers of major capsid protein/MCP, which are linked together by heterotrimers called triplexes. These triplexes are formed by a single molecule of triplex protein 1/TRX1 and two copies of triplex protein 2/TRX2. Additionally, TRX1 is required for efficient transport of TRX2 to the nucleus, which is the site of capsid assembly. In Homo sapiens (Human), this protein is Triplex capsid protein 2.